We begin with the raw amino-acid sequence, 174 residues long: ATP synthase subunit delta (174 aa).

The protein belongs to the ATPase delta chain family. As to quaternary structure, F-type ATPases have 2 components, F(1) - the catalytic core - and F(0) - the membrane proton channel. F(1) has five subunits: alpha(3), beta(3), gamma(1), delta(1), epsilon(1). F(0) has three main subunits: a(1), b(2) and c(10-14). The alpha and beta chains form an alternating ring which encloses part of the gamma chain. F(1) is attached to F(0) by a central stalk formed by the gamma and epsilon chains, while a peripheral stalk is formed by the delta and b chains.

It localises to the cell inner membrane. Its function is as follows. F(1)F(0) ATP synthase produces ATP from ADP in the presence of a proton or sodium gradient. F-type ATPases consist of two structural domains, F(1) containing the extramembraneous catalytic core and F(0) containing the membrane proton channel, linked together by a central stalk and a peripheral stalk. During catalysis, ATP synthesis in the catalytic domain of F(1) is coupled via a rotary mechanism of the central stalk subunits to proton translocation. This protein is part of the stalk that links CF(0) to CF(1). It either transmits conformational changes from CF(0) to CF(1) or is implicated in proton conduction. The sequence is that of ATP synthase subunit delta from Francisella tularensis subsp. tularensis (strain FSC 198).